Consider the following 461-residue polypeptide: tRNA modification GTPase MnmE (461 aa).

(6S)-5-formyl-5,6,7,8-tetrahydrofolate is bound by residues arginine 23, glutamate 84, and arginine 123. The TrmE-type G domain occupies 216 to 383 (GARAALIGRP…LGATVARLLL (168 aa)). Asparagine 226 lines the K(+) pocket. GTP contacts are provided by residues 226 to 231 (NAGKSS), 245 to 251 (TPIPGTT), and 270 to 273 (DTAG). Serine 230 contributes to the Mg(2+) binding site. K(+) is bound by residues threonine 245, isoleucine 247, and threonine 250. Threonine 251 is a Mg(2+) binding site. Lysine 461 serves as a coordination point for (6S)-5-formyl-5,6,7,8-tetrahydrofolate.

Belongs to the TRAFAC class TrmE-Era-EngA-EngB-Septin-like GTPase superfamily. TrmE GTPase family. Homodimer. Heterotetramer of two MnmE and two MnmG subunits. K(+) serves as cofactor.

It localises to the cytoplasm. Exhibits a very high intrinsic GTPase hydrolysis rate. Involved in the addition of a carboxymethylaminomethyl (cmnm) group at the wobble position (U34) of certain tRNAs, forming tRNA-cmnm(5)s(2)U34. This chain is tRNA modification GTPase MnmE, found in Roseiflexus sp. (strain RS-1).